The sequence spans 445 residues: Oxysterols receptor LXR-alpha (445 aa).

Disordered regions lie at residues 1 to 34 and 63 to 86; these read MSLW…QGGN and ALLP…KKGP. The tract at residues 1 to 94 is transactivation AF-1; required for ligand-independent transactivation function; that stretch reads MSLWLEASMP…GPAPKMLGNE (94 aa). The segment at residues 93–168 is a DNA-binding region (nuclear receptor); the sequence is NELCSVCGDK…AGMREECVLS (76 aa). NR C4-type zinc fingers lie at residues 96 to 116 and 132 to 156; these read CSVC…CEGC and CHSG…LRKC. At Ser-191 the chain carries Phosphoserine. The segment at 203–445 is transactivation AF-2; required for ligand-dependent transactivation function; mediates interaction with CCAR2; it reads QLSPEQLGMI…LLSEIWDVHE (243 aa). In terms of domain architecture, NR LBD spans 207-445; that stretch reads EQLGMIEKLV…LLSEIWDVHE (239 aa).

The protein belongs to the nuclear hormone receptor family. NR1 subfamily. As to quaternary structure, heterodimer of NR1H3 and RXR (retinoic acid receptor). Interacts with CCAR2 (via N-terminus) in a ligand-independent manner. Interacts with SIRT1 and this interaction is inhibited by CCAR2. In terms of processing, ubiquitinated. Ubiquitination by UBR5 leads to its degradation: UBR5 specifically recognizes and binds ligand-bound NR1H3 when it is not associated with coactivators (NCOAs). In presence of NCOAs, the UBR5-degron is not accessible, preventing its ubiquitination and degradation.

It is found in the nucleus. The protein resides in the cytoplasm. Its function is as follows. Nuclear receptor that exhibits a ligand-dependent transcriptional activation activity. Interaction with retinoic acid receptor (RXR) shifts RXR from its role as a silent DNA-binding partner to an active ligand-binding subunit in mediating retinoid responses through target genes defined by LXRES. LXRES are DR4-type response elements characterized by direct repeats of two similar hexanuclotide half-sites spaced by four nucleotides. Plays an important role in the regulation of cholesterol homeostasis, regulating cholesterol uptake through MYLIP-dependent ubiquitination of LDLR, VLDLR and LRP8. Interplays functionally with RORA for the regulation of genes involved in liver metabolism. Induces LPCAT3-dependent phospholipid remodeling in endoplasmic reticulum (ER) membranes of hepatocytes, driving SREBF1 processing and lipogenesis. Via LPCAT3, triggers the incorporation of arachidonate into phosphatidylcholines of ER membranes, increasing membrane dynamics and enabling triacylglycerols transfer to nascent very low-density lipoprotein (VLDL) particles. Via LPCAT3 also counteracts lipid-induced ER stress response and inflammation, likely by modulating SRC kinase membrane compartmentalization and limiting the synthesis of lipid inflammatory mediators. This Mus musculus (Mouse) protein is Oxysterols receptor LXR-alpha (Nr1h3).